A 385-amino-acid chain; its full sequence is MNIETTITRAWQRQAAWLWLLLPVSWLYSLLMILRRQAYKAGIFSSYRAPIPVMVIGNITVGGSGKTPLIIALVRHLQQQGIKVGVISRGYGGDSSQMPALVNTESVPNIVGDEPCLIVNMTGVAMAVCPNRQQAMTTLLASYPDLQLIIADDGLQHYALQRDIEWIVVDAARGFGNKQLLPTGFLREPMSRLKGANVVYHQKADSLSSTDDKYDDTCPPTKRLRMHLQPDNLERLWSFDTQSDGLATVKAMAPEKGSRVHAVSGIGYPQRFFDTLDTLGFQVSPHPYPDHHDFSLTELLRYTEHPIIVTSKDAVKIRALLMQETINQTNQTNQTLSDEYNELGSRLWVLPVTAVLSDGCYEILQQQLQTLNIAISSKEHERVIT.

Residue threonine 60–threonine 67 participates in ATP binding.

It belongs to the LpxK family.

It carries out the reaction a lipid A disaccharide + ATP = a lipid IVA + ADP + H(+). It functions in the pathway glycolipid biosynthesis; lipid IV(A) biosynthesis; lipid IV(A) from (3R)-3-hydroxytetradecanoyl-[acyl-carrier-protein] and UDP-N-acetyl-alpha-D-glucosamine: step 6/6. Transfers the gamma-phosphate of ATP to the 4'-position of a tetraacyldisaccharide 1-phosphate intermediate (termed DS-1-P) to form tetraacyldisaccharide 1,4'-bis-phosphate (lipid IVA). The protein is Tetraacyldisaccharide 4'-kinase of Psychrobacter arcticus (strain DSM 17307 / VKM B-2377 / 273-4).